Here is a 442-residue protein sequence, read N- to C-terminus: Histidinol dehydrogenase (442 aa).

Positions 142, 204, and 227 each coordinate NAD(+). 3 residues coordinate substrate: S250, Q272, and H275. Zn(2+) is bound by residues Q272 and H275. Active-site proton acceptor residues include E340 and H341. H341, D374, E428, and H433 together coordinate substrate. A Zn(2+)-binding site is contributed by D374. Zn(2+) is bound at residue H433.

The protein belongs to the histidinol dehydrogenase family. Zn(2+) serves as cofactor.

It carries out the reaction L-histidinol + 2 NAD(+) + H2O = L-histidine + 2 NADH + 3 H(+). Its pathway is amino-acid biosynthesis; L-histidine biosynthesis; L-histidine from 5-phospho-alpha-D-ribose 1-diphosphate: step 9/9. Functionally, catalyzes the sequential NAD-dependent oxidations of L-histidinol to L-histidinaldehyde and then to L-histidine. This is Histidinol dehydrogenase from Prochlorococcus marinus (strain MIT 9313).